Reading from the N-terminus, the 83-residue chain is Exodeoxyribonuclease 7 small subunit (83 aa).

It belongs to the XseB family. In terms of assembly, heterooligomer composed of large and small subunits.

It is found in the cytoplasm. It carries out the reaction Exonucleolytic cleavage in either 5'- to 3'- or 3'- to 5'-direction to yield nucleoside 5'-phosphates.. Its function is as follows. Bidirectionally degrades single-stranded DNA into large acid-insoluble oligonucleotides, which are then degraded further into small acid-soluble oligonucleotides. This is Exodeoxyribonuclease 7 small subunit from Sinorhizobium medicae (strain WSM419) (Ensifer medicae).